A 1328-amino-acid chain; its full sequence is WASH complex subunit 2 (1328 aa).

The sufficient for interaction with WASHC3, WASHC4 and WASHC5; required for interaction with WASHC1 stretch occupies residues 1-219 (MNRTSPDSEQ…VGSDRGSIVD (219 aa)). Ser-157, Ser-159, Ser-204, Ser-205, and Ser-209 each carry phosphoserine. Residues 201-213 (GELSSEEGSVGSD) are compositionally biased toward low complexity. Disordered stretches follow at residues 201–655 (GELS…KTNL) and 675–830 (KKTQ…PKST). 2 stretches are compositionally biased toward acidic residues: residues 219 to 231 (DSED…ESDD) and 248 to 273 (SDEE…EDIE). Ser-283 bears the Phosphoserine mark. Basic and acidic residues predominate over residues 288–323 (LAARIKGDVSNQRKEGHTDGKPQRTVKEKKERRTPA). Thr-321 is modified (phosphothreonine). The sufficient for interaction with CCDC93 stretch occupies residues 346–592 (SRGGLFSDRQ…QTSSLPPQSQ (247 aa)). The interval 347–1328 (RGGLFSDRQG…DDPLNAFGSQ (982 aa)) is interaction with VPS35. The short motif at 357 to 367 (LFDDDDESDLF) is the LFa 1 element. Phosphoserine is present on residues Ser-384 and Ser-387. 2 short sequence motifs (LFa) span residues 440-455 (LFDD…DNFF) and 474-483 (IFDDDEGDLF). The span at 441–453 (FDDDDNDSDEDDN) shows a compositional bias: acidic residues. The span at 508–528 (TITLPSSKNPKLVSETKTQKG) shows a compositional bias: polar residues. 2 consecutive short sequence motifs (LFa) follow at residues 529-540 (LFSDEEDSEDLF) and 564-575 (LFGDEDEEDNLF). Residues Ser-531 and Ser-536 each carry the phosphoserine modification. Over residues 539–556 (LFSSQSSSKTKSASVLSS) the composition is skewed to low complexity. Polar residues predominate over residues 582-592 (KQTSSLPPQSQ). Phosphoserine occurs at positions 610 and 611. Basic and acidic residues predominate over residues 627-638 (ASERKSKGERWD). 2 short sequence motifs (LFa) span residues 655–667 (LFEE…VDLF) and 683–695 (LFED…SSLF). Over residues 690-699 (SGSSLFSLPP) the composition is skewed to polar residues. A phosphoserine mark is found at Ser-720, Ser-744, Ser-749, Ser-780, and Ser-795. The segment covering 797 to 808 (FDEDEDKVEDDS) has biased composition (acidic residues). 2 short sequence motifs (LFa) span residues 832–840 (VFQDEELLF) and 849–855 (DPDVDLF). Disordered stretches follow at residues 863-940 (LSMP…EPSS) and 991-1088 (PTLP…AMAV). 2 positions are modified to phosphoserine: Ser-867 and Ser-870. Positions 871–881 (LFGDDDDDDLF) match the LFa 10 motif. The span at 894–919 (PEKKGTLRKDHKPPELTEGSKEKSTW) shows a compositional bias: basic and acidic residues. The interval 925 to 1328 (QDSSGLTPFK…DDPLNAFGSQ (404 aa)) is interaction with phospholipids. The segment covering 1016-1034 (NKGRVKVRGKRRPQTRAAR) has biased composition (basic residues). A required for interaction with F-actin-capping protein subunit alpha (CAPZA1 or CAPZA2 or CAPZA3) region spans residues 1017-1035 (KGRVKVRGKRRPQTRAARR). Phosphoserine occurs at positions 1042, 1060, 1077, and 1102. The disordered stretch occupies residues 1115 to 1210 (AHLFDSGDIF…KKNQWKSDSH (96 aa)). 3 consecutive short sequence motifs (LFa) follow at residues 1117 to 1124 (LFDSGDIF), 1157 to 1171 (VFPD…DDLF), and 1187 to 1195 (LLEDEEDLF). A phosphoserine mark is found at Ser-1162 and Ser-1165. The span at 1196–1210 (ADQKGKKNQWKSDSH) shows a compositional bias: basic and acidic residues. 3 short sequence motifs (LFa) span residues 1220 to 1226 (IFEDDIF), 1249 to 1257 (LFDDNIDIF), and 1277 to 1286 (MFDDDTDDIF). Positions 1289-1310 (GLQAKASKPKSQSAEAVSELRS) are disordered. An LFa 17 motif is present at residues 1317-1325 (IFDDPLNAF). Phosphoserine is present on Ser-1327.

This sequence belongs to the FAM21 family. In terms of assembly, component of the WASH core complex also described as WASH regulatory complex (SHRC) composed of WASHC1, WASHC2, WASHC3, WASHC4 and WASHC5; in the complex interacts (via N-terminus) directly with WASHC1. The WASH core complex associates with the F-actin-capping protein dimer (formed by CAPZA1, CAPZA2 or CAPZA3 and CAPZB) in a transient or substoichiometric manner which was initially described as WASH complex. Interacts with VPS35; mediates the association with the retromer CSC complex. Interacts with FKBP15. Interacts with CCDC93, CCDC22, VPS35L; indicative for an association of the WASH core complex with the CCC and retriever complexes. Directly interacts with TBC1D23.

Its subcellular location is the early endosome membrane. It is found in the cell membrane. In terms of biological role, acts as a component of the WASH core complex that functions as a nucleation-promoting factor (NPF) at the surface of endosomes, where it recruits and activates the Arp2/3 complex to induce actin polymerization, playing a key role in the fission of tubules that serve as transport intermediates during endosome sorting. Mediates the recruitment of the WASH core complex to endosome membranes via binding to phospholipids and VPS35 of the retromer CSC. Mediates the recruitment of the F-actin-capping protein dimer to the WASH core complex probably promoting localized F-actin polymerization needed for vesicle scission. Via its C-terminus binds various phospholipids, most strongly phosphatidylinositol 4-phosphate (PtdIns-(4)P), phosphatidylinositol 5-phosphate (PtdIns-(5)P) and phosphatidylinositol 3,5-bisphosphate (PtdIns-(3,5)P2). Involved in the endosome-to-plasma membrane trafficking and recycling of SNX27-retromer-dependent cargo proteins, such as GLUT1. Required for the association of DNAJC13, ENTR1, ANKRD50 with retromer CSC subunit VPS35. Required for the endosomal recruitment of CCC and retriever complexes subunits COMMD1 and CCDC93 as well as the retrievere complex subunit VPS35L. This Rattus norvegicus (Rat) protein is WASH complex subunit 2.